Here is a 1265-residue protein sequence, read N- to C-terminus: 1-phosphatidylinositol 4,5-bisphosphate phosphodiesterase gamma-2 (1265 aa).

The region spanning 20–131 is the PH domain; it reads RALELGTVMT…WLSGLKILHQ (112 aa). Residues 312–456 enclose the PI-PLC X-box domain; it reads QDMNNPLSHY…LREKIIIKHK (145 aa). Residues H327 and H372 contribute to the active site. SH2 domains are found at residues 532–635 and 646–735; these read WFHK…TDPV and WYYD…RYPV. A phosphotyrosine; by BTK mark is found at Y753 and Y759. In terms of domain architecture, SH3 spans 769-829; it reads MPQRTVKALY…PSNYVEDISA (61 aa). A PI-PLC Y-box domain is found at 930-1044; the sequence is LSDLVVYCKP…GYVLQPESMR (115 aa). In terms of domain architecture, C2 spans 1038 to 1169; that stretch reads LQPESMRSEK…SGFRSVPLKN (132 aa). Phosphotyrosine; by BTK is present on Y1197. A phosphotyrosine mark is found at Y1217 and Y1245.

As to quaternary structure, part of a complex composed of EEIG1, TNFRSF11A/RANK, PLCG2, GAB2, TEC and BTK; complex formation increases in the presence of TNFSF11/RANKL. Interacts (via SH2 domain) with CSF1R (tyrosine phosphorylated). Interacts constitutively with THEMIS2. It depends on Ca(2+) as a cofactor. Phosphorylated on tyrosine residues by CSF1R. Phosphorylated on tyrosine residues by BTK and SYK; upon ligand-induced activation of a variety of growth factor receptors and immune system receptors. Phosphorylation leads to increased phospholipase activity.

The protein localises to the membrane raft. It carries out the reaction a 1,2-diacyl-sn-glycero-3-phospho-(1D-myo-inositol-4,5-bisphosphate) + H2O = 1D-myo-inositol 1,4,5-trisphosphate + a 1,2-diacyl-sn-glycerol + H(+). The production of the second messenger molecules diacylglycerol (DAG) and inositol 1,4,5-trisphosphate (IP3) is mediated by activated phosphatidylinositol-specific phospholipase C enzymes. It is a crucial enzyme in transmembrane signaling. The sequence is that of 1-phosphatidylinositol 4,5-bisphosphate phosphodiesterase gamma-2 from Rattus norvegicus (Rat).